The chain runs to 133 residues: Thioredoxin-like protein CXXS1 (133 aa).

The Thioredoxin domain occupies 1 to 120 (MEIQQQKGVG…VKKMVDASAE (120 aa)).

This sequence belongs to the thioredoxin family.

This Oryza sativa subsp. japonica (Rice) protein is Thioredoxin-like protein CXXS1.